A 490-amino-acid polypeptide reads, in one-letter code: Aspartyl/glutamyl-tRNA(Asn/Gln) amidotransferase subunit B (490 aa).

The protein belongs to the GatB/GatE family. GatB subfamily. Heterotrimer of A, B and C subunits.

The enzyme catalyses L-glutamyl-tRNA(Gln) + L-glutamine + ATP + H2O = L-glutaminyl-tRNA(Gln) + L-glutamate + ADP + phosphate + H(+). The catalysed reaction is L-aspartyl-tRNA(Asn) + L-glutamine + ATP + H2O = L-asparaginyl-tRNA(Asn) + L-glutamate + ADP + phosphate + 2 H(+). Functionally, allows the formation of correctly charged Asn-tRNA(Asn) or Gln-tRNA(Gln) through the transamidation of misacylated Asp-tRNA(Asn) or Glu-tRNA(Gln) in organisms which lack either or both of asparaginyl-tRNA or glutaminyl-tRNA synthetases. The reaction takes place in the presence of glutamine and ATP through an activated phospho-Asp-tRNA(Asn) or phospho-Glu-tRNA(Gln). This chain is Aspartyl/glutamyl-tRNA(Asn/Gln) amidotransferase subunit B, found in Methylobacterium nodulans (strain LMG 21967 / CNCM I-2342 / ORS 2060).